The following is a 315-amino-acid chain: MKTHSDRKSGLHPRNRHQAPYDFDALCLRTPELRPLVFVNEHGTQTLDFADPAAVKALNKALLALHYGIAHWDLPAGYLCPPIPGRVDYLHRVADLLAESAGCVPTGKGVRVLDIGVGANCIYPLLGAREYGWRFVGSDIDPVSVKAAALLAKSNGLGGQIECRHQGNAKHVFRGIISPQERFALTLCNPPFHGSLDEASKGSERKLGKTVQGQPVLNFGGQKAELWCEGGEAGFLATMIVQSKEFAAQCLWFSSLVSKKENLPAAKKALAQVGARQVRVIDMAQGNKVSRILAWSFLDEVACGQWWQPALRGGV.

Belongs to the methyltransferase superfamily. METTL16/RlmF family.

The protein localises to the cytoplasm. It carries out the reaction adenosine(1618) in 23S rRNA + S-adenosyl-L-methionine = N(6)-methyladenosine(1618) in 23S rRNA + S-adenosyl-L-homocysteine + H(+). Its function is as follows. Specifically methylates the adenine in position 1618 of 23S rRNA. In Aeromonas salmonicida (strain A449), this protein is Ribosomal RNA large subunit methyltransferase F.